The sequence spans 457 residues: G-protein coupled receptor 135 (457 aa).

The disordered stretch occupies residues 1–26 (MEEQARPPGRPAASATLQGSAHPGGA). Residues 1-64 (MEEQARPPGR…EAAGSRGPAP (64 aa)) are Extracellular-facing. The N-linked (GlcNAc...) asparagine glycan is linked to Asn-47. The helical transmembrane segment at 65–85 (LLWHGAAVAAQALVLLLIFLL) threads the bilayer. Residues 86–109 (SSLGNCAVMGVIVKHRQLRTVTNA) lie on the Cytoplasmic side of the membrane. The chain crosses the membrane as a helical span at residues 110-130 (FILSLSLSDLLTALLCLPAAF). Over 131–156 (LDLFAPPGDSGPWRSFCAASRFFSSC) the chain is Extracellular. Residues 157 to 177 (FGIVSTFSVALISLDRYCAIV) form a helical membrane-spanning segment. The Cytoplasmic portion of the chain corresponds to 178 to 189 (RPPRDKLGRRRA). A helical membrane pass occupies residues 190 to 210 (LQLLAGAWLAALGFSLPWDLL). Residues 211 to 235 (RAPREPPAPQSFHRCLYRTSPDPAQ) lie on the Extracellular side of the membrane. A helical membrane pass occupies residues 236 to 256 (LGVAYSVGLVVACYLLPFLLM). Topologically, residues 257 to 295 (CFCRYHICKTVRLSDVRVRPMTTYARVLRFFSEVRTATT) are cytoplasmic. Residues 296–316 (VLIMIIFVMCCWGPYCFLVLL) form a helical membrane-spanning segment. The Extracellular segment spans residues 317–329 (AATRQGQATQAPS). Residues 330–350 (LLNVAAVWLTWANGAINPVIY) form a helical membrane-spanning segment. At 351–457 (AIRNPNISML…HNSETRDSSI (107 aa)) the chain is on the cytoplasmic side.

The protein belongs to the G-protein coupled receptor 1 family. Interacts with MTNR1B. Interacts with ARRB1 and ARRB2 in a spontaneous and agonist-independent manner; leading to the internalization of GPR135 in the endosomal compartment.

Its subcellular location is the cell membrane. It localises to the endosome membrane. Functionally, orphan receptor. Has spontaneous activity for beta-arrestin recruitment. Shows a reciprocal regulatory interaction with the melatonin receptor MTNR1B most likely through receptor heteromerization. The polypeptide is G-protein coupled receptor 135 (Gpr135) (Mus musculus (Mouse)).